Reading from the N-terminus, the 189-residue chain is Elongation factor P (189 aa).

It belongs to the elongation factor P family.

It localises to the cytoplasm. It functions in the pathway protein biosynthesis; polypeptide chain elongation. In terms of biological role, involved in peptide bond synthesis. Stimulates efficient translation and peptide-bond synthesis on native or reconstituted 70S ribosomes in vitro. Probably functions indirectly by altering the affinity of the ribosome for aminoacyl-tRNA, thus increasing their reactivity as acceptors for peptidyl transferase. The polypeptide is Elongation factor P (Rhizobium leguminosarum bv. trifolii (strain WSM2304)).